The sequence spans 231 residues: Protein OPG061 (231 aa).

The protein belongs to the orthopoxvirus OPG058 family.

Its subcellular location is the host nucleus. It localises to the host nucleolus. This is Protein OPG061 (OPG061) from Variola virus.